A 544-amino-acid chain; its full sequence is GMP synthase [glutamine-hydrolyzing] (544 aa).

The region spanning 12 to 210 (TILILDFGSQ…VKNVCSVRDG (199 aa)) is the Glutamine amidotransferase type-1 domain. C88 serves as the catalytic Nucleophile. Catalysis depends on residues H184 and E186. Residues 211–419 (WSMESFIPKE…LNIPEHLVGR (209 aa)) form the GMPS ATP-PPase domain. An ATP-binding site is contributed by 239-245 (SGGVDST). Residues R312, D481, K536, and E542 each coordinate XMP.

As to quaternary structure, homodimer. Also forms a small population of homotetramers. It depends on Mg(2+) as a cofactor.

It localises to the cytoplasm. The protein resides in the cytosol. The catalysed reaction is XMP + L-glutamine + ATP + H2O = GMP + L-glutamate + AMP + diphosphate + 2 H(+). The protein operates within purine metabolism; GMP biosynthesis; GMP from XMP (L-Gln route): step 1/1. Catalyzes the conversion of xanthine monophosphate (XMP) to GMP in the presence of glutamine and ATP through an adenyl-XMP intermediate. In Cryptococcus neoformans var. neoformans serotype D (strain JEC21 / ATCC MYA-565) (Filobasidiella neoformans), this protein is GMP synthase [glutamine-hydrolyzing].